The chain runs to 856 residues: Subtilisin-like protease SBT2.2 (856 aa).

Residues 1–21 (MRRVLMVNFGVLLLFCFGVLS) form the signal peptide. The propeptide at 22–159 (NSFGQDNGGD…IVLDFSVRTA (138 aa)) is activation peptide. Residues N35 and N85 are each glycosylated (N-linked (GlcNAc...) asparagine). The Inhibitor I9 domain occupies 40–159 (VYIVTLRQAS…IVLDFSVRTA (120 aa)). The Peptidase S8 domain maps to 164 to 709 (PQFMGLPKGA…NGFVNATAAL (546 aa)). D193 acts as the Charge relay system in catalysis. 2 N-linked (GlcNAc...) asparagine glycosylation sites follow: N204 and N255. H269 functions as the Charge relay system in the catalytic mechanism. Residues N412, N441, N495, N540, and N568 are each glycosylated (N-linked (GlcNAc...) asparagine). The PA domain maps to 432–528 (MISALDALKN…MDMPGIIIPS (97 aa)). S634 acts as the Charge relay system in catalysis. 7 N-linked (GlcNAc...) asparagine glycosylation sites follow: N704, N730, N738, N748, N767, N782, and N823.

Belongs to the peptidase S8 family.

Its subcellular location is the secreted. The chain is Subtilisin-like protease SBT2.2 from Arabidopsis thaliana (Mouse-ear cress).